A 365-amino-acid chain; its full sequence is 3-dehydroquinate synthase (365 aa).

NAD(+)-binding positions include 75-80 (DAENGK), 109-113 (GAATD), 133-134 (TT), Lys146, and Lys155. Glu188, His253, and His269 together coordinate Zn(2+).

The protein belongs to the sugar phosphate cyclases superfamily. Dehydroquinate synthase family. It depends on Co(2+) as a cofactor. Zn(2+) is required as a cofactor. Requires NAD(+) as cofactor.

The protein localises to the cytoplasm. It carries out the reaction 7-phospho-2-dehydro-3-deoxy-D-arabino-heptonate = 3-dehydroquinate + phosphate. It functions in the pathway metabolic intermediate biosynthesis; chorismate biosynthesis; chorismate from D-erythrose 4-phosphate and phosphoenolpyruvate: step 2/7. Its function is as follows. Catalyzes the conversion of 3-deoxy-D-arabino-heptulosonate 7-phosphate (DAHP) to dehydroquinate (DHQ). This is 3-dehydroquinate synthase from Corynebacterium glutamicum (strain R).